The following is a 390-amino-acid chain: 3-ketoacyl-CoA thiolase (390 aa).

C95 serves as the catalytic Acyl-thioester intermediate. Residues H346 and C376 each act as proton acceptor in the active site.

This sequence belongs to the thiolase-like superfamily. Thiolase family. In terms of assembly, heterotetramer of two alpha chains (FadB) and two beta chains (FadA).

The protein resides in the cytoplasm. The enzyme catalyses an acyl-CoA + acetyl-CoA = a 3-oxoacyl-CoA + CoA. It functions in the pathway lipid metabolism; fatty acid beta-oxidation. In terms of biological role, catalyzes the final step of fatty acid oxidation in which acetyl-CoA is released and the CoA ester of a fatty acid two carbons shorter is formed. This is 3-ketoacyl-CoA thiolase from Psychrobacter cryohalolentis (strain ATCC BAA-1226 / DSM 17306 / VKM B-2378 / K5).